A 181-amino-acid polypeptide reads, in one-letter code: Large ribosomal subunit protein bL19 (181 aa).

A compositionally biased stretch (basic and acidic residues) spans 162-173; that stretch reads EKKAAAEAEAAK. The interval 162–181 is disordered; that stretch reads EKKAAAEAEAAKAAEATPAE.

The protein belongs to the bacterial ribosomal protein bL19 family.

In terms of biological role, this protein is located at the 30S-50S ribosomal subunit interface and may play a role in the structure and function of the aminoacyl-tRNA binding site. This chain is Large ribosomal subunit protein bL19, found in Mesorhizobium japonicum (strain LMG 29417 / CECT 9101 / MAFF 303099) (Mesorhizobium loti (strain MAFF 303099)).